The primary structure comprises 386 residues: Succinate--CoA ligase [ADP-forming] subunit beta (386 aa).

The 236-residue stretch at 9–244 (KELLKQFGVP…LDEEDPAEIE (236 aa)) folds into the ATP-grasp domain. Residues Lys-46, 53-55 (GRG), Glu-99, Ala-102, and Glu-107 each bind ATP. The Mg(2+) site is built by Asn-199 and Asp-213. Residues Asn-264 and 321 to 323 (GIM) contribute to the substrate site.

It belongs to the succinate/malate CoA ligase beta subunit family. As to quaternary structure, heterotetramer of two alpha and two beta subunits. Requires Mg(2+) as cofactor.

It carries out the reaction succinate + ATP + CoA = succinyl-CoA + ADP + phosphate. It catalyses the reaction GTP + succinate + CoA = succinyl-CoA + GDP + phosphate. It functions in the pathway carbohydrate metabolism; tricarboxylic acid cycle; succinate from succinyl-CoA (ligase route): step 1/1. In terms of biological role, succinyl-CoA synthetase functions in the citric acid cycle (TCA), coupling the hydrolysis of succinyl-CoA to the synthesis of either ATP or GTP and thus represents the only step of substrate-level phosphorylation in the TCA. The beta subunit provides nucleotide specificity of the enzyme and binds the substrate succinate, while the binding sites for coenzyme A and phosphate are found in the alpha subunit. This Bordetella avium (strain 197N) protein is Succinate--CoA ligase [ADP-forming] subunit beta.